Reading from the N-terminus, the 103-residue chain is ATP synthase subunit c (103 aa).

Helical transmembrane passes span 3–23 (FLALLCLGMVGFAFGAEVSGL), 30–50 (SIAGAVIGLGIAALGGAIGMG), and 74–94 (MFIALALIEAQVIYTLVLALI).

This sequence belongs to the ATPase C chain family. As to quaternary structure, F-type ATPases have 2 components, F(1) - the catalytic core - and F(0) - the membrane proton channel. F(1) has five subunits: alpha(3), beta(3), gamma(1), delta(1), epsilon(1). F(0) has three main subunits: a(1), b(2) and c(10-14). The alpha and beta chains form an alternating ring which encloses part of the gamma chain. F(1) is attached to F(0) by a central stalk formed by the gamma and epsilon chains, while a peripheral stalk is formed by the delta and b chains.

Its subcellular location is the cell inner membrane. F(1)F(0) ATP synthase produces ATP from ADP in the presence of a proton or sodium gradient. F-type ATPases consist of two structural domains, F(1) containing the extramembraneous catalytic core and F(0) containing the membrane proton channel, linked together by a central stalk and a peripheral stalk. During catalysis, ATP synthesis in the catalytic domain of F(1) is coupled via a rotary mechanism of the central stalk subunits to proton translocation. In terms of biological role, key component of the F(0) channel; it plays a direct role in translocation across the membrane. A homomeric c-ring of between 10-14 subunits forms the central stalk rotor element with the F(1) delta and epsilon subunits. This chain is ATP synthase subunit c, found in Helicobacter hepaticus (strain ATCC 51449 / 3B1).